The following is a 118-amino-acid chain: Beta-2-microglobulin (118 aa).

A signal peptide spans 1–20 (MARVVALVLLGLLSLTGLEA). In terms of domain architecture, Ig-like C1-type spans 25–111 (PKVQVYSRHP…QHSTLKEPLI (87 aa)). An intrachain disulfide couples C45 to C99.

Belongs to the beta-2-microglobulin family. In terms of assembly, heterodimer of an alpha chain and a beta chain. Beta-2-microglobulin is the beta-chain of major histocompatibility complex class I molecules.

Its subcellular location is the secreted. Its function is as follows. Component of the class I major histocompatibility complex (MHC). Involved in the presentation of peptide antigens to the immune system. This Equus asinus (Donkey) protein is Beta-2-microglobulin (B2M).